The chain runs to 104 residues: Replication restart protein PriB (104 aa).

Positions 2-101 constitute an SSB domain; sequence TNRLVLSGTV…LHAEQIELID (100 aa). Cysteines 48 and 80 form a disulfide. Residues 82-89 carry the L45 loop motif; that stretch reads KAKNGLSK.

The protein belongs to the PriB family. Homodimer. Primosome assembly occurs via a 'hand-off' mechanism. PriA binds to replication forks, subsequently PriB then DnaT bind; DnaT then displaces ssDNA to generate the helicase loading substrate, which allows DnaC to load helicase DnaB onto the fork. ssDNA is displaced from the PriB-ssDNA complex by DnaT. In a PriA-PriB-replication fork structure, movement of the PriA CRR domain exposes a surface to which PriB binds and contacts ssDNA emerging from the PriA pore. Binds PriA; binding is improved in the presence of ssDNA. Weakly binds DnaT; binding is improved in the presence of ssDNA; as DnaT levels increase PriB dissociates from ssDNA. Component of the replication restart primosome, which is composed of PriA, PriB, PriC, DnaB and DnaT; DnaG primase associates transiently with this complex. Component of the preprimosomal complex composed of one monomer of PriC and DnaT, two monomers of PriA, two dimers of PriB and one hexamer of DnaB. An intersubunit disulfide bond is seen in some crystals.

In terms of biological role, involved in the restart of stalled replication forks, which reloads the replicative helicase (DnaB) on sites other than the origin of replication; the PriA-PriB pathway is the major replication restart pathway. There are several restart pathways, the PriA-PriB pathway is subdivided into 2 distinct pathways. priB and priC have redundant roles in the cell. During primosome assembly it facilitates complex formation between PriA and DnaT on DNA; stabilizes PriA on DNA, presumably by preventing or inhibiting PriA DNA translocation activity. Forms a branched DNA-PriA-PriB complex when the lagging strand is single-stranded (ss)DNA. Binds ssDNA in the presence and absence of ssDNA DNA-binding protein (SSB), does not bind branched structures. DNA binding, forming spiral filaments on ssDNA, is cooperative. Stimulates the helicase activity of PriA. The homodimer binds 12 nucleotides of ssDNA. Binds homo-pyrimidine tracts better than homo-purine tracts. Genetic interactions among priB, dam, lexA, nagC, polA, rdgB, rdgB, rep and uup link the PriA-PriB replication restart pathway to DNA double-strand break repair. This chain is Replication restart protein PriB, found in Escherichia coli (strain K12).